A 288-amino-acid chain; its full sequence is Ribosomal RNA small subunit methyltransferase A (288 aa).

Residues asparagine 37, leucine 39, glycine 64, glutamate 86, aspartate 112, and asparagine 131 each coordinate S-adenosyl-L-methionine.

The protein belongs to the class I-like SAM-binding methyltransferase superfamily. rRNA adenine N(6)-methyltransferase family. RsmA subfamily.

It localises to the cytoplasm. The enzyme catalyses adenosine(1518)/adenosine(1519) in 16S rRNA + 4 S-adenosyl-L-methionine = N(6)-dimethyladenosine(1518)/N(6)-dimethyladenosine(1519) in 16S rRNA + 4 S-adenosyl-L-homocysteine + 4 H(+). In terms of biological role, specifically dimethylates two adjacent adenosines (A1518 and A1519) in the loop of a conserved hairpin near the 3'-end of 16S rRNA in the 30S particle. May play a critical role in biogenesis of 30S subunits. In Rhodospirillum rubrum (strain ATCC 11170 / ATH 1.1.1 / DSM 467 / LMG 4362 / NCIMB 8255 / S1), this protein is Ribosomal RNA small subunit methyltransferase A.